The primary structure comprises 597 residues: DNA mismatch repair protein MutL (597 aa).

It belongs to the DNA mismatch repair MutL/HexB family.

This protein is involved in the repair of mismatches in DNA. It is required for dam-dependent methyl-directed DNA mismatch repair. May act as a 'molecular matchmaker', a protein that promotes the formation of a stable complex between two or more DNA-binding proteins in an ATP-dependent manner without itself being part of a final effector complex. In Rhodopseudomonas palustris (strain BisB5), this protein is DNA mismatch repair protein MutL.